A 231-amino-acid polypeptide reads, in one-letter code: ATP phosphoribosyltransferase (231 aa).

The protein belongs to the ATP phosphoribosyltransferase family. Short subfamily. Heteromultimer composed of HisG and HisZ subunits.

It localises to the cytoplasm. The catalysed reaction is 1-(5-phospho-beta-D-ribosyl)-ATP + diphosphate = 5-phospho-alpha-D-ribose 1-diphosphate + ATP. Its pathway is amino-acid biosynthesis; L-histidine biosynthesis; L-histidine from 5-phospho-alpha-D-ribose 1-diphosphate: step 1/9. In terms of biological role, catalyzes the condensation of ATP and 5-phosphoribose 1-diphosphate to form N'-(5'-phosphoribosyl)-ATP (PR-ATP). Has a crucial role in the pathway because the rate of histidine biosynthesis seems to be controlled primarily by regulation of HisG enzymatic activity. The protein is ATP phosphoribosyltransferase of Brucella suis biovar 1 (strain 1330).